The chain runs to 429 residues: 3-phosphoshikimate 1-carboxyvinyltransferase (429 aa).

Positions 20, 21, and 25 each coordinate 3-phosphoshikimate. Lys-20 is a binding site for phosphoenolpyruvate. Residues Gly-89 and Arg-118 each contribute to the phosphoenolpyruvate site. Positions 164, 165, 166, 192, 311, and 338 each coordinate 3-phosphoshikimate. Gln-166 is a phosphoenolpyruvate binding site. Catalysis depends on Asp-311, which acts as the Proton acceptor. 2 residues coordinate phosphoenolpyruvate: Arg-342 and Arg-384.

This sequence belongs to the EPSP synthase family. Monomer.

The protein localises to the cytoplasm. It carries out the reaction 3-phosphoshikimate + phosphoenolpyruvate = 5-O-(1-carboxyvinyl)-3-phosphoshikimate + phosphate. It participates in metabolic intermediate biosynthesis; chorismate biosynthesis. Catalyzes the transfer of the enolpyruvyl moiety of phosphoenolpyruvate (PEP) to the 5-hydroxyl of shikimate-3-phosphate (S3P) to produce enolpyruvyl shikimate-3-phosphate and inorganic phosphate. In Methanococcus maripaludis (strain DSM 14266 / JCM 13030 / NBRC 101832 / S2 / LL), this protein is 3-phosphoshikimate 1-carboxyvinyltransferase.